Here is a 394-residue protein sequence, read N- to C-terminus: Protein TsgA homolog (394 aa).

Helical transmembrane passes span 11–31, 51–71, 76–96, 101–121, 134–154, 162–182, 206–226, 246–266, 274–294, 302–322, 334–354, and 363–383; these read WISY…GIVM, FLNA…EIIP, LVFG…GHNL, ISMF…TFLV, LLFT…AAAM, WYWV…LTLC, VGVL…LGFI, QLVS…SFIL, IVTV…STDN, ILAL…LGSL, FILT…GPIV, and LATA…LGFF.

Belongs to the major facilitator superfamily. TsgA family.

It is found in the cell inner membrane. The chain is Protein TsgA homolog from Yersinia pseudotuberculosis serotype O:1b (strain IP 31758).